Reading from the N-terminus, the 470-residue chain is 3-isopropylmalate dehydratase large subunit (470 aa).

3 residues coordinate [4Fe-4S] cluster: C351, C411, and C414.

Belongs to the aconitase/IPM isomerase family. LeuC type 1 subfamily. In terms of assembly, heterodimer of LeuC and LeuD. It depends on [4Fe-4S] cluster as a cofactor.

The catalysed reaction is (2R,3S)-3-isopropylmalate = (2S)-2-isopropylmalate. It participates in amino-acid biosynthesis; L-leucine biosynthesis; L-leucine from 3-methyl-2-oxobutanoate: step 2/4. Functionally, catalyzes the isomerization between 2-isopropylmalate and 3-isopropylmalate, via the formation of 2-isopropylmaleate. This Shewanella frigidimarina (strain NCIMB 400) protein is 3-isopropylmalate dehydratase large subunit.